A 334-amino-acid chain; its full sequence is Ribosomal RNA small subunit methyltransferase H (334 aa).

Residues 39–41 (GGH), D59, F83, D100, and Q107 contribute to the S-adenosyl-L-methionine site. The segment at 303-334 (ERTQAHGAERSDMRRAERPDARRAEHGEVLPP) is disordered.

The protein belongs to the methyltransferase superfamily. RsmH family.

The protein localises to the cytoplasm. The enzyme catalyses cytidine(1402) in 16S rRNA + S-adenosyl-L-methionine = N(4)-methylcytidine(1402) in 16S rRNA + S-adenosyl-L-homocysteine + H(+). Specifically methylates the N4 position of cytidine in position 1402 (C1402) of 16S rRNA. The sequence is that of Ribosomal RNA small subunit methyltransferase H from Verminephrobacter eiseniae (strain EF01-2).